A 154-amino-acid polypeptide reads, in one-letter code: 6,7-dimethyl-8-ribityllumazine synthase (154 aa).

Residues F22, 56–58, and 80–82 each bind 5-amino-6-(D-ribitylamino)uracil; these read AFE and TVI. 85-86 contributes to the (2S)-2-hydroxy-3-oxobutyl phosphate binding site; the sequence is ST. H88 serves as the catalytic Proton donor. Residue F113 participates in 5-amino-6-(D-ribitylamino)uracil binding. R127 contacts (2S)-2-hydroxy-3-oxobutyl phosphate.

Belongs to the DMRL synthase family.

The enzyme catalyses (2S)-2-hydroxy-3-oxobutyl phosphate + 5-amino-6-(D-ribitylamino)uracil = 6,7-dimethyl-8-(1-D-ribityl)lumazine + phosphate + 2 H2O + H(+). It functions in the pathway cofactor biosynthesis; riboflavin biosynthesis; riboflavin from 2-hydroxy-3-oxobutyl phosphate and 5-amino-6-(D-ribitylamino)uracil: step 1/2. In terms of biological role, catalyzes the formation of 6,7-dimethyl-8-ribityllumazine by condensation of 5-amino-6-(D-ribitylamino)uracil with 3,4-dihydroxy-2-butanone 4-phosphate. This is the penultimate step in the biosynthesis of riboflavin. In Lactococcus lactis subsp. cremoris (strain MG1363), this protein is 6,7-dimethyl-8-ribityllumazine synthase.